Consider the following 645-residue polypeptide: Lipase 1 (645 aa).

An N-terminal signal peptide occupies residues 1 to 24; it reads MKRSFIFAPGMLALSISAISNAHA. The active-site Nucleophile is the Ser34. Catalysis depends on residues Asp327 and His330. One can recognise an Autotransporter domain in the interval 383–645; sequence NEQGKLGVFG…SFSLGVNASF (263 aa).

Belongs to the 'GDSL' lipolytic enzyme family.

The protein resides in the secreted. It carries out the reaction a triacylglycerol + H2O = a diacylglycerol + a fatty acid + H(+). This chain is Lipase 1 (lip-1), found in Photorhabdus luminescens (Xenorhabdus luminescens).